Consider the following 967-residue polypeptide: Probable disease resistance protein At1g61190 (967 aa).

The stretch at 20-68 (RCLCGKGYIRNLEKNLRALQREMEDLRATQHEVQNKVAREESRHQQRLE) forms a coiled coil. The disordered stretch occupies residues 132–153 (GNFDEVSQPPPRSEVEERPTQP). Residues 138-441 (SQPPPRSEVE…CEGFIGEDQV (304 aa)) enclose the NB-ARC domain. 180 to 187 (GMGGVGKT) serves as a coordination point for ATP. LRR repeat units follow at residues 516–537 (AVRRMSLMMNEIEEITCESKCS), 538–559 (ELTTLFLQSNQLKNLSGEFIRY), 562–585 (KLVVLDLSHNPDFNELPEQISGLV), 586–608 (SLQYLDLSWTRIEQLPVGLKELK), and 609–631 (KLIFLNLCFTERLCSISGISRLL).

The protein belongs to the disease resistance NB-LRR family.

Probable disease resistance protein. The chain is Probable disease resistance protein At1g61190 from Arabidopsis thaliana (Mouse-ear cress).